Reading from the N-terminus, the 128-residue chain is Disintegrin ocellatusin (128 aa).

The signal sequence occupies residues 1–20 (MIPVLLVTICLAVFPFQGSS). Positions 21–65 (IILESGNINDYEIVYPKKVAVLPTGAMNSAHPCYDPVTCQPKEKE) are excised as a propeptide. One can recognise a Disintegrin domain in the interval 26 to 112 (GNINDYEIVY…DCPRNPYKGE (87 aa)). 5 cysteine pairs are disulfide-bonded: Cys-53–Cys-59, Cys-67–Cys-76, Cys-72–Cys-97, Cys-73–Cys-102, and Cys-85–Cys-104. A Cell attachment site motif is present at residues 89–91 (RGD). Residues 116–128 (MEWPAPAKGSVLM) constitute a propeptide that is removed on maturation.

In terms of assembly, monomer. Expressed by the venom gland.

It localises to the secreted. Its function is as follows. The disintegrin ocellatusin-10c1 is a poor inhibitor of platelet aggregation. The disintegrin inhibits the adhesion of cells expressing the RGD-dependent integrin alpha-5/beta-1 (ITGA5/ITGB1) to immobilized fibronectin. Inhibition on alpha-2b/beta-3 (ITGA2B/ITGB3) is low, and there is no inhibition on alpha-1/beta-1 (ITGA1/ITGB1), alpha-2/beta-1 (ITGA2/ITGB1) and alpha-6/beta-1 (ITGA6/ITGB1). In terms of biological role, the short monomeric disintegrin ocellatusin inhibits ADP-induced platelet aggregation (IC(50)=168 nM). Inhibits alpha-5/beta-1 (ITGA5/ITGB1) integrin and induces the expression of a ligand-induced binding site epitope on beta-1 integrin subunit. Has a direct chemotactic stimulus on human neutrophils in vitro. The polypeptide is Disintegrin ocellatusin (Echis ocellatus (Ocellated saw-scaled viper)).